The primary structure comprises 943 residues: Netrin receptor UNC5B-a (943 aa).

Positions 1-30 (MYLSRNPSGAALAAILVALILSCNFPSSTA) are cleaved as a signal peptide. Over 31–380 (GIEYSDVLPD…LESTGDVALY (350 aa)) the chain is Extracellular. The Ig-like domain occupies 51–148 (PHFLLEPEDA…AGTTKSKRSY (98 aa)). Disulfide bonds link cysteine 72–cysteine 133, cysteine 84–cysteine 131, cysteine 177–cysteine 228, cysteine 261–cysteine 298, cysteine 265–cysteine 302, cysteine 276–cysteine 288, cysteine 317–cysteine 351, cysteine 321–cysteine 356, and cysteine 329–cysteine 341. Residues 150-245 (RIAYLRKNFD…KRRSTTATVI (96 aa)) form the Ig-like C2-type domain. A glycan (N-linked (GlcNAc...) asparagine) is linked at asparagine 225. 2 TSP type-1 domains span residues 249–303 (NGGW…TMCP) and 305–357 (DGGW…GLCM). Residue asparagine 350 is glycosylated (N-linked (GlcNAc...) asparagine). Residues 381–401 (AGLVVAIFIVIILLMAVGIVV) traverse the membrane as a helical segment. Residues 402–943 (YRRNCREFDT…MLVMATDGDC (542 aa)) are Cytoplasmic-facing. The 144-residue stretch at 542-685 (NSVTGTFGSL…LGTYAFVGES (144 aa)) folds into the ZU5 domain. The interval 688–836 (RSAIKRLQLA…LEENVKSFDP (149 aa)) is UPA domain. One can recognise a Death domain in the interval 863-941 (KICNSLDAPN…EMMLVMATDG (79 aa)).

Belongs to the unc-5 family. Interacts (via extracellular domain) with flrt3 (via extracellular domain). Interacts with rnd1. In terms of processing, phosphorylated on cytoplasmic tyrosine residues. In terms of tissue distribution, in the developing visual system, it is expressed within the developing optic vesicles and later become restricted to the dorsal ciliary marginal zone, a site of retinoblast proliferation and differentiation.

It localises to the cell membrane. Its function is as follows. Plays a role in cell-cell adhesion during embryonic development. Receptor for netrin required for axon guidance. Mediates axon repulsion of neuronal growth cones in the developing nervous system upon ligand binding. The protein is Netrin receptor UNC5B-a (unc5b-a) of Xenopus laevis (African clawed frog).